The following is a 93-amino-acid chain: Alpha-defensin 21 (93 aa).

An N-terminal signal peptide occupies residues methionine 1 to threonine 19. Residues aspartate 20 to leucine 58 constitute a propeptide that is removed on maturation. Residues isoleucine 22–serine 43 form a disordered region. Residues threonine 25 to glutamine 40 show a composition bias toward acidic residues. Disulfide bonds link cysteine 64-cysteine 89, cysteine 66-cysteine 81, and cysteine 71-cysteine 88.

It belongs to the alpha-defensin family.

The protein localises to the secreted. May have microbicidal activities. This is Alpha-defensin 21 (Defa21) from Mus musculus (Mouse).